The following is a 315-amino-acid chain: MQPVHTSVLLEECLEFLKPDASDNLFVDGTLGEGGHTEAFLKRYPQLNAIGVDADVSIQERAKERLKPFGERIRFHLGWSDEFFKNYPKDFAPPNLILLDLGISMFHYVKSGRGFSFSSDEPLDMRLNPELRLSAADIVNSYNEKDLADLIFNYGEERYSRKIASRIVEQRAAAAFSNAKELADCIYKAVPQNYRHGKIHPATKTFQALRIAVNGELDRLPRLLEAAFSVLAPNGRLGLITFHSLEDRIVKFYFKELGKSCTCPENMPICKCGGRPRAEVLTKKAVKASDEEIRLNPPSRSARLRVVRKIDYRES.

S-adenosyl-L-methionine is bound by residues Gly34–His36, Asp53, Asp100, and His107.

The protein belongs to the methyltransferase superfamily. RsmH family.

The protein localises to the cytoplasm. The enzyme catalyses cytidine(1402) in 16S rRNA + S-adenosyl-L-methionine = N(4)-methylcytidine(1402) in 16S rRNA + S-adenosyl-L-homocysteine + H(+). Its function is as follows. Specifically methylates the N4 position of cytidine in position 1402 (C1402) of 16S rRNA. In Treponema denticola (strain ATCC 35405 / DSM 14222 / CIP 103919 / JCM 8153 / KCTC 15104), this protein is Ribosomal RNA small subunit methyltransferase H.